Here is a 209-residue protein sequence, read N- to C-terminus: Uridine kinase (209 aa).

12–19 (GGSGSGKT) contacts ATP.

It belongs to the uridine kinase family.

It is found in the cytoplasm. It carries out the reaction uridine + ATP = UMP + ADP + H(+). The catalysed reaction is cytidine + ATP = CMP + ADP + H(+). Its pathway is pyrimidine metabolism; CTP biosynthesis via salvage pathway; CTP from cytidine: step 1/3. The protein operates within pyrimidine metabolism; UMP biosynthesis via salvage pathway; UMP from uridine: step 1/1. This chain is Uridine kinase, found in Listeria welshimeri serovar 6b (strain ATCC 35897 / DSM 20650 / CCUG 15529 / CIP 8149 / NCTC 11857 / SLCC 5334 / V8).